The primary structure comprises 95 residues: uncharacterized protein (95 aa).

The N-terminal stretch at 1-17 (MTSSLVIYIFLWSRLIC) is a signal peptide.

This is an uncharacterized protein from Saccharomyces cerevisiae (strain ATCC 204508 / S288c) (Baker's yeast).